Consider the following 619-residue polypeptide: DEAD-box ATP-dependent RNA helicase 35B (619 aa).

Low complexity-rich tracts occupy residues 1 to 10 (MAAAAAAAAA) and 49 to 58 (PPTTNAVAVA). The interval 1-72 (MAAAAAAAAA…PPRSTSSPAV (72 aa)) is disordered. The short motif at 173–201 (RSFGDLRLPEPILRALRGKGIEKPTPIQV) is the Q motif element. One can recognise a Helicase ATP-binding domain in the interval 204 to 388 (LPVALSGRDM…KSALVKPIIV (185 aa)). 217–224 (AFTGSGKT) is an ATP binding site. The short motif at 336 to 339 (DEAD) is the DEAD box element. One can recognise a Helicase C-terminal domain in the interval 399–559 (DVIQEVEYVK…RLPPILADLD (161 aa)). A CCHC-type zinc finger spans residues 576 to 593 (KGCAFCGGLGHRIEACPK).

The protein belongs to the DEAD box helicase family. DDX41 subfamily.

The catalysed reaction is ATP + H2O = ADP + phosphate + H(+). The sequence is that of DEAD-box ATP-dependent RNA helicase 35B from Oryza sativa subsp. japonica (Rice).